The sequence spans 469 residues: ABHD16B (469 aa).

Residues 174-298 enclose the AB hydrolase-1 domain; it reads VICCEGNAGF…GLVVRTVREH (125 aa). Catalysis depends on charge relay system residues serine 247, aspartate 322, and histidine 418.

The protein belongs to the AB hydrolase superfamily. ABHD16 family.

The catalysed reaction is a 1,2-diacyl-sn-glycero-3-phospho-L-serine + H2O = a 2-acyl-sn-glycero-3-phospho-L-serine + a fatty acid + H(+). The enzyme catalyses a 1-acylglycerol + H2O = glycerol + a fatty acid + H(+). It carries out the reaction 1-(9Z-octadecenoyl)-glycerol + H2O = glycerol + (9Z)-octadecenoate + H(+). Functionally, hydrolyzes the sn-1 position of glycerophospholipids with high specificity towards phosphatidylserine (PS), PS-PLA1 enzyme. Also hydrolyzes the acyl chain of glycerolipids with a preference for the monoacylglycerol (MAG) 1-acylglycerol, MAG lipase. Plays a regulatory role in cellular lipid homeostasis by modulating genes involved in neutral lipid degradation and in phospholipid synthesis and composition. This chain is ABHD16B, found in Homo sapiens (Human).